The sequence spans 488 residues: Membrane-bound lytic murein transglycosylase F (488 aa).

The signal sequence occupies residues M1–A25. Residues G26–V269 form a non-LT domain region. The segment at D270–L488 is LT domain. E316 is an active-site residue.

This sequence in the N-terminal section; belongs to the bacterial solute-binding protein 3 family. In the C-terminal section; belongs to the transglycosylase Slt family.

It is found in the cell outer membrane. It catalyses the reaction Exolytic cleavage of the (1-&gt;4)-beta-glycosidic linkage between N-acetylmuramic acid (MurNAc) and N-acetylglucosamine (GlcNAc) residues in peptidoglycan, from either the reducing or the non-reducing ends of the peptidoglycan chains, with concomitant formation of a 1,6-anhydrobond in the MurNAc residue.. In terms of biological role, murein-degrading enzyme that degrades murein glycan strands and insoluble, high-molecular weight murein sacculi, with the concomitant formation of a 1,6-anhydromuramoyl product. Lytic transglycosylases (LTs) play an integral role in the metabolism of the peptidoglycan (PG) sacculus. Their lytic action creates space within the PG sacculus to allow for its expansion as well as for the insertion of various structures such as secretion systems and flagella. The polypeptide is Membrane-bound lytic murein transglycosylase F (Ectopseudomonas mendocina (strain ymp) (Pseudomonas mendocina)).